Consider the following 262-residue polypeptide: Phosphonates import ATP-binding protein PhnC (262 aa).

Residues Ile5–Asn253 form the ABC transporter domain. Gly37–Ser44 lines the ATP pocket.

This sequence belongs to the ABC transporter superfamily. Phosphonates importer (TC 3.A.1.9.1) family. As to quaternary structure, the complex is composed of two ATP-binding proteins (PhnC), two transmembrane proteins (PhnE) and a solute-binding protein (PhnD).

Its subcellular location is the cell inner membrane. It catalyses the reaction phosphonate(out) + ATP + H2O = phosphonate(in) + ADP + phosphate + H(+). Part of the ABC transporter complex PhnCDE involved in phosphonates import. Responsible for energy coupling to the transport system. The sequence is that of Phosphonates import ATP-binding protein PhnC from Shigella boydii serotype 4 (strain Sb227).